We begin with the raw amino-acid sequence, 217 residues long: Ufm1-specific protease 1 (217 aa).

Catalysis depends on residues cysteine 53, aspartate 175, and histidine 177.

It belongs to the peptidase C78 family. As to expression, widely expressed. Expressed at higher level in brain, heart, kidney and skeletal muscle.

The protein localises to the cytoplasm. It localises to the cytosol. Its function is as follows. Thiol-dependent isopeptidase that specifically mediate the processing of UFM1 precursors as well as the deconjugation of UFM1 from target proteins. Mainly responsible for the maturation of the UFM1 precursor, a prerequisite for conjugation reactions. The sequence is that of Ufm1-specific protease 1 from Mus musculus (Mouse).